Reading from the N-terminus, the 314-residue chain is Ribosomal protein L11 methyltransferase (314 aa).

4 residues coordinate S-adenosyl-L-methionine: Thr166, Gly187, Asp209, and Asn251.

It belongs to the methyltransferase superfamily. PrmA family.

It localises to the cytoplasm. It catalyses the reaction L-lysyl-[protein] + 3 S-adenosyl-L-methionine = N(6),N(6),N(6)-trimethyl-L-lysyl-[protein] + 3 S-adenosyl-L-homocysteine + 3 H(+). Functionally, methylates ribosomal protein L11. This Clostridium tetani (strain Massachusetts / E88) protein is Ribosomal protein L11 methyltransferase.